The primary structure comprises 898 residues: Sodium/hydrogen exchanger 5 (898 aa).

The Cytoplasmic segment spans residues 1–3; sequence MLR. The helical transmembrane segment at 4–24 threads the bilayer; sequence VALLLLPGLPLAGVGATEEPT. Residues 25–47 are Extracellular-facing; the sequence is QEPGPLGEPPGLALFRWQWHEVE. The chain crosses the membrane as a helical span at residues 48–68; it reads APYLVALWILVASLAKIVFHL. Topologically, residues 69 to 75 are cytoplasmic; the sequence is SRKVTSL. A helical transmembrane segment spans residues 76–96; the sequence is VPESCLLILLGLALGGIVLAV. Over 97–136 the chain is Extracellular; the sequence is AKKAEYQLEPGTFFLFLLPPIVLDSGYFMPSRLFFDNLGA. A helical membrane pass occupies residues 137 to 157; it reads ILTYAVVGTLWNAFTTGVALW. At 158–175 the chain is on the cytoplasmic side; that stretch reads GLQQAGLVAPRVQAGLLD. Residues 176-196 traverse the membrane as a helical segment; sequence FLLFGSLISAVDPVAVLAVFE. Residues 197–202 are Extracellular-facing; that stretch reads EVHVNE. The N-linked (GlcNAc...) asparagine glycan is linked to Asn201. The helical transmembrane segment at 203-223 threads the bilayer; that stretch reads TLFIIVFGESLLNDAVTVVLY. The Cytoplasmic portion of the chain corresponds to 224 to 248; that stretch reads KVCNSFVEMGSANVQATDYLKGVAS. The helical transmembrane segment at 249 to 269 threads the bilayer; that stretch reads LFVVSLGGAAVGLVFAFLLAL. Topologically, residues 270–278 are extracellular; the sequence is TTRFTKRVR. A helical transmembrane segment spans residues 279–299; it reads IIEPLLVFLLAYAAYLTAEMA. At 300–333 the chain is on the cytoplasmic side; sequence SLSAILAVTMCGLGCKKYVEANISHKSRTAVKYT. The helical transmembrane segment at 334–354 threads the bilayer; that stretch reads MKTLASSAETVIFMLLGISAV. Residues 355–362 are Extracellular-facing; it reads DSSKWAWD. A helical transmembrane segment spans residues 363–383; sequence SGLVLGTLFFILFFRALGVVL. Topologically, residues 384-400 are cytoplasmic; that stretch reads QTWVLNQFRLVPLDKID. The helical transmembrane segment at 401–421 threads the bilayer; sequence QVVMSYGGLRGAVAFALVILL. Over 422–430 the chain is Extracellular; that stretch reads DRTKVPAKD. Residues 431–451 form a helical membrane-spanning segment; sequence YFVATTIVVVFFTVIVQGLTI. Topologically, residues 452 to 898 are cytoplasmic; it reads KPLVKWLRVK…CIQFNRGGRL (447 aa). Disordered stretches follow at residues 660-692 and 801-888; these read TKSKPRPRKTGHKKKDGVANPEATNGKPPRDLG and ESLA…NSHW. The segment covering 662-674 has biased composition (basic residues); sequence SKPRPRKTGHKKK. The segment covering 856–867 has biased composition (polar residues); sequence ESSADIPQQQEL.

This sequence belongs to the monovalent cation:proton antiporter 1 (CPA1) transporter (TC 2.A.36) family. Interacts with CHP1 and CHP2. Interacts with ARRB2; facilitates the endocytosis of SLC9A5 from the plasma membrane. Interacts with RACK1; this interaction positively regulates SLC9A5 activity and promotes SLC9A5 localization to focal adhesions. Interacts with SCAMP2; this interaction regulates SLC9A5 cell-surface targeting and SLC9A5 activity. In terms of processing, phosphorylated by PRKAA2; promotes its accumulation at the cell surface. Phosphorylated by CSNK2A1 in a manner favoring its beta-arrestin binding and endocytosis. Highly expressed in brain. Strongly expressed in the dentate gyrus.

It is found in the cell membrane. The protein localises to the recycling endosome membrane. Its subcellular location is the cell projection. It localises to the dendritic spine membrane. The protein resides in the synaptic cell membrane. It is found in the cell junction. The protein localises to the focal adhesion. It carries out the reaction Na(+)(in) + H(+)(out) = Na(+)(out) + H(+)(in). Functionally, plasma membrane Na(+)/H(+) antiporter. Mediates the electroneutral exchange of intracellular H(+) ions for extracellular Na(+) in 1:1 stoichiometry. Responsible for regulating intracellular pH homeostasis, in particular in neural tissues. Acts as a negative regulator of dendritic spine growth. Plays a role in postsynaptic remodeling and signaling. Can also contribute to organellar pH regulation, with consequences for receptor tyrosine kinase trafficking. The protein is Sodium/hydrogen exchanger 5 (Slc9a5) of Rattus norvegicus (Rat).